The following is a 511-amino-acid chain: Probable DNA ligase (511 aa).

E209 provides a ligand contact to ATP. K211 serves as the catalytic N6-AMP-lysine intermediate. Residues R216, R231, E260, F299, R371, and K377 each contribute to the ATP site.

This sequence belongs to the ATP-dependent DNA ligase family. Mg(2+) is required as a cofactor.

It carries out the reaction ATP + (deoxyribonucleotide)n-3'-hydroxyl + 5'-phospho-(deoxyribonucleotide)m = (deoxyribonucleotide)n+m + AMP + diphosphate.. DNA ligase that seals nicks in double-stranded DNA during DNA replication, DNA recombination and DNA repair. This chain is Probable DNA ligase, found in Mycolicibacterium gilvum (strain PYR-GCK) (Mycobacterium gilvum (strain PYR-GCK)).